The chain runs to 213 residues: MAITQFRLFKFCTCLATVFSFLKRLICRSGRGRKLSGDQITLPTTVDYSSVPKQTDVEEWTSWDEDAPTSVKIEGGNGNVATQQNSLEQLEPDYFKDMTPTIRKTQKIVIKKREPLNFGIPDGSTGFSSRLAATQDLPFIHQSSELGDLDTWQENTNAWEEEEDAAWQAEEVLRQQKLADREKRAAEQQRKKMEKEAQRLMKKEQNKIGVKLS.

The Extracellular portion of the chain corresponds to 1–6 (MAITQF). The chain crosses the membrane as a helical; Signal-anchor for type III membrane protein span at residues 7-27 (RLFKFCTCLATVFSFLKRLIC). Residues 28 to 213 (RSGRGRKLSG…EQNKIGVKLS (186 aa)) are Cytoplasmic-facing. Phosphoserine is present on S36. T41 is subject to Phosphothreonine. Y94 carries the phosphotyrosine modification. Residues 163-211 (EDAAWQAEEVLRQQKLADREKRAAEQQRKKMEKEAQRLMKKEQNKIGVK) are a coiled coil. A compositionally biased stretch (basic and acidic residues) spans 178–206 (LADREKRAAEQQRKKMEKEAQRLMKKEQN). Residues 178 to 213 (LADREKRAAEQQRKKMEKEAQRLMKKEQNKIGVKLS) are disordered.

In terms of assembly, homodimer. As to expression, widely expressed. Expressed in ovary, testis, prostate, thymus, muscle and heart, but not in small intestine, colon, lymph nodes, or peripherical blood lymphocytes. The protein is not detected in any of the above organs.

The protein resides in the golgi apparatus membrane. Functionally, may participate in suppression of cell proliferation and induces apoptotic cell death through activation of interleukin-1-beta converting enzyme (ICE)-like proteases. The polypeptide is Receptor-binding cancer antigen expressed on SiSo cells (EBAG9) (Homo sapiens (Human)).